The sequence spans 860 residues: Leucine--tRNA ligase (860 aa).

Positions 42-52 (PYPSGRLHMGH) match the 'HIGH' region motif. The 'KMSKS' region motif lies at 619 to 623 (KMSKS). ATP is bound at residue K622.

It belongs to the class-I aminoacyl-tRNA synthetase family.

The protein localises to the cytoplasm. It carries out the reaction tRNA(Leu) + L-leucine + ATP = L-leucyl-tRNA(Leu) + AMP + diphosphate. The chain is Leucine--tRNA ligase from Escherichia coli O9:H4 (strain HS).